A 188-amino-acid polypeptide reads, in one-letter code: Elongation factor P-like protein (188 aa).

It belongs to the elongation factor P family.

In Vibrio campbellii (strain ATCC BAA-1116), this protein is Elongation factor P-like protein.